The chain runs to 286 residues: UPF0761 membrane protein KPK_5501 (286 aa).

7 consecutive transmembrane segments (helical) span residues Leu44–Phe64, Phe74–Phe94, Val104–Leu124, Phe140–Ile160, Leu183–Thr203, Ala210–Leu230, and Val244–Leu264.

It belongs to the UPF0761 family.

It localises to the cell inner membrane. The protein is UPF0761 membrane protein KPK_5501 of Klebsiella pneumoniae (strain 342).